A 248-amino-acid chain; its full sequence is 3-deoxy-manno-octulosonate cytidylyltransferase (248 aa).

This sequence belongs to the KdsB family.

Its subcellular location is the cytoplasm. The enzyme catalyses 3-deoxy-alpha-D-manno-oct-2-ulosonate + CTP = CMP-3-deoxy-beta-D-manno-octulosonate + diphosphate. Its pathway is nucleotide-sugar biosynthesis; CMP-3-deoxy-D-manno-octulosonate biosynthesis; CMP-3-deoxy-D-manno-octulosonate from 3-deoxy-D-manno-octulosonate and CTP: step 1/1. It participates in bacterial outer membrane biogenesis; lipopolysaccharide biosynthesis. Its function is as follows. Activates KDO (a required 8-carbon sugar) for incorporation into bacterial lipopolysaccharide in Gram-negative bacteria. This is 3-deoxy-manno-octulosonate cytidylyltransferase from Chlorobium phaeobacteroides (strain BS1).